Reading from the N-terminus, the 119-residue chain is Transcription and mRNA export factor SUS1 (119 aa).

The protein belongs to the ENY2 family. Component of the nuclear pore complex (NPC)-associated TREX-2 complex (transcription and export complex 2), composed of at least SUS1, SAC3, THP1, SEM1, and CDC31. TREX-2 contains 2 SUS1 chains. The TREX-2 complex interacts with the nucleoporin NUP1. Component of the 1.8 MDa SAGA transcription coactivator-HAT complex. SAGA is built of 5 distinct domains with specialized functions. Within the SAGA complex, SUS1, SGF11, SGF73 and UBP8 form an additional subcomplex of SAGA called the DUB module (deubiquitination module). Interacts directly with THP1, SAC3, SGF11, and with the RNA polymerase II.

It localises to the nucleus. The protein localises to the nucleoplasm. The protein resides in the cytoplasm. It is found in the P-body. Functionally, involved in mRNA export coupled transcription activation by association with both the TREX-2 and the SAGA complexes. At the promoters, SAGA is required for recruitment of the basal transcription machinery. It influences RNA polymerase II transcriptional activity through different activities such as TBP interaction and promoter selectivity, interaction with transcription activators, and chromatin modification through histone acetylation and deubiquitination. Within the SAGA complex, participates in a subcomplex required for deubiquitination of H2B and for the maintenance of steady-state H3 methylation levels. The TREX-2 complex functions in docking export-competent ribonucleoprotein particles (mRNPs) to the nuclear entrance of the nuclear pore complex (nuclear basket). TREX-2 participates in mRNA export and accurate chromatin positioning in the nucleus by tethering genes to the nuclear periphery. May also be involved in cytoplasmic mRNA decay by interaction with components of P-bodies. In Candida albicans (strain SC5314 / ATCC MYA-2876) (Yeast), this protein is Transcription and mRNA export factor SUS1.